Consider the following 182-residue polypeptide: Peptidyl-tRNA hydrolase (182 aa).

Y14 is a binding site for tRNA. Residue H19 is the Proton acceptor of the active site. 3 residues coordinate tRNA: F64, N66, and N112.

The protein belongs to the PTH family. In terms of assembly, monomer.

The protein localises to the cytoplasm. The enzyme catalyses an N-acyl-L-alpha-aminoacyl-tRNA + H2O = an N-acyl-L-amino acid + a tRNA + H(+). Functionally, hydrolyzes ribosome-free peptidyl-tRNAs (with 1 or more amino acids incorporated), which drop off the ribosome during protein synthesis, or as a result of ribosome stalling. In terms of biological role, catalyzes the release of premature peptidyl moieties from peptidyl-tRNA molecules trapped in stalled 50S ribosomal subunits, and thus maintains levels of free tRNAs and 50S ribosomes. This is Peptidyl-tRNA hydrolase from Wolbachia sp. subsp. Drosophila simulans (strain wRi).